A 127-amino-acid chain; its full sequence is Protein ApaG (127 aa).

In terms of domain architecture, ApaG spans 3-127 (DDPRYRVEVE…FVLSVPRTLH (125 aa)).

This chain is Protein ApaG, found in Xanthomonas campestris pv. campestris (strain 8004).